The following is a 468-amino-acid chain: SVGFKAGVKEYKLTYYTPEYQTKDTDILAAFRVTPQPGVPPEEAGAAVAAESSTGTWTTVWTDGLTSLDRYKGRCYRIERVVGEKDQYIAYVAYPLDLFEEGSVTNMFTSIVGNVFGFKALRALRLEDLRIPPAYVKTFQGPPHGIQVERDKLNKYGRPLLGCTIKPKLGLSAKNYGRAVYECLRGGLDFTKDDENVNSQPFMRWRDRFLFCAEALYKAQAETGEIKGHYLNATAGTCEEMIKRAVFARELGVPIVMHDYLTGGFTANTSLAHYCRDNGLLLHIHRAMHAVIDRQKNHGIHFRVLAKALRMSGGDHIHSGTVVGKLEGERDITLGFVDLLRDDFVEQDRSRGIYFTQDWVSLPGVLPVASGGIHVWHMPALTEIFGDDSVLQFGGGTLGHPWGNAPGAVANRVALEACVQARNEGRDLAQEGNAIIREACKWSPELAAACEVWKEIVFNFAAVDVLDK.

K5 carries the post-translational modification N6,N6,N6-trimethyllysine. Positions 114 and 164 each coordinate substrate. K166 serves as the catalytic Proton acceptor. K168 serves as a coordination point for substrate. K192, D194, and E195 together coordinate Mg(2+). The residue at position 192 (K192) is an N6-carboxylysine. H285 acts as the Proton acceptor in catalysis. Substrate is bound by residues R286, H318, and S370.

It belongs to the RuBisCO large chain family. Type I subfamily. As to quaternary structure, heterohexadecamer of 8 large chains and 8 small chains; disulfide-linked. The disulfide link is formed within the large subunit homodimers. Mg(2+) is required as a cofactor. Post-translationally, the disulfide bond which can form in the large chain dimeric partners within the hexadecamer appears to be associated with oxidative stress and protein turnover.

It is found in the plastid. It localises to the chloroplast. The catalysed reaction is 2 (2R)-3-phosphoglycerate + 2 H(+) = D-ribulose 1,5-bisphosphate + CO2 + H2O. It carries out the reaction D-ribulose 1,5-bisphosphate + O2 = 2-phosphoglycolate + (2R)-3-phosphoglycerate + 2 H(+). Its function is as follows. RuBisCO catalyzes two reactions: the carboxylation of D-ribulose 1,5-bisphosphate, the primary event in carbon dioxide fixation, as well as the oxidative fragmentation of the pentose substrate in the photorespiration process. Both reactions occur simultaneously and in competition at the same active site. This Anthocercis viscosa (Sticky tailflower) protein is Ribulose bisphosphate carboxylase large chain.